The primary structure comprises 608 residues: Dihydroxyacetone kinase (608 aa).

The DhaK domain occupies Tyr8–Trp357. Residues Gly53 to His56, Lys105, and Asp110 each bind substrate. Catalysis depends on His234, which acts as the Tele-hemiaminal-histidine intermediate. A DhaL domain is found at Lys392–Asp599. Residues Asp421 to Cys424, Thr467 to Ser468, Thr523 to Leu524, and Asp584 to Gly586 contribute to the ATP site.

The protein belongs to the dihydroxyacetone kinase (DAK) family.

The protein localises to the cytoplasm. The catalysed reaction is dihydroxyacetone + ATP = dihydroxyacetone phosphate + ADP + H(+). It catalyses the reaction D-glyceraldehyde + ATP = D-glyceraldehyde 3-phosphate + ADP + H(+). It participates in polyol metabolism; glycerol fermentation; glycerone phosphate from glycerol (oxidative route): step 2/2. Functionally, catalyzes both the phosphorylation of dihydroxyacetone and of glyceraldehyde. In Komagataella pastoris (Yeast), this protein is Dihydroxyacetone kinase (DAK).